The sequence spans 881 residues: Regulatory protein GAL4 (881 aa).

Zn(2+) contacts are provided by Cys-11, Cys-14, Cys-21, Cys-28, Cys-31, and Cys-38. Positions 11–38 (CDICRLKKLKCSKEKPKCAKCLKNNWEC) form a DNA-binding region, zn(2)-C6 fungal-type. Position 694 is a phosphotyrosine (Tyr-694). A phosphoserine mark is found at Ser-696, Ser-699, Ser-703, and Ser-712. The disordered stretch occupies residues 723-743 (RPPSRNSPVTIPRSTPSHRSV). A 9aaTAD motif is present at residues 862 to 870 (DDVYNYLFD).

Binds DNA as a homodimer. Interacts directly with the mediator subunits GAL11/MED15 and SRB4/MED17. Post-translationally, association between GAL11 and GAL4 may serve to expedite phosphorylation of GAL4.

The protein resides in the nucleus. Its function is as follows. This protein is a positive regulator for the gene expression of the galactose-induced genes such as GAL1, GAL2, GAL7, GAL10, and MEL1 which code for the enzymes used to convert galactose to glucose. It recognizes a 17 base pair sequence in (5'-CGGRNNRCYNYNCNCCG-3') the upstream activating sequence (UAS-G) of these genes. This chain is Regulatory protein GAL4 (GAL4), found in Saccharomyces cerevisiae (strain ATCC 204508 / S288c) (Baker's yeast).